The chain runs to 407 residues: Probable sodium/metabolite cotransporter BASS5, chloroplastic (407 aa).

The transit peptide at 1-57 (MGVISPTETLFLKSQHRLLQPRNYSYALAFHSTRRVANFPRNSFSSLGSCSVDFPLR) directs the protein to the chloroplast. 9 helical membrane-spanning segments follow: residues 101–121 (FIPHGILLSTILALVYPPSFT), 122–142 (WFKPRYFVPGLGFMMFAVGIN), 162–184 (YIGQYLIKPLLGYIFGVIAVSLF), 191–213 (GAGIMLVSCVSGAQLSNYTTFLT), 222–242 (IVMTSISTATAVLVTPMLSLL), 252–272 (VFGMISSILQVVITPIAAGLL), 286–306 (PFLPALTVIDMSCCIGAPLAL), 317–337 (ATILFLVITFHLLAFVAGYFF), and 379–399 (LVGVPPAISTVVMSLMGVSLV).

It belongs to the bile acid:sodium symporter (BASS) (TC 2.A.28) family. As to expression, widely expressed.

It is found in the membrane. The protein localises to the plastid. The protein resides in the chloroplast envelope. Its function is as follows. Plastidic transporter involved in the biosynthesis of aliphatic glucosinolates by translocating the biosynthetic intermediates of Met-derived glucosinolates across chloroplast membranes. Transports short chain (C2) alpha-keto acids, such as 4-methylsulfanyl-2-oxobutanoic acid, from the cytosol to the chloroplast where they are subjected to chain elongation cycles. Also functions in the transport of chain-elongated (C3 to C8) Met derivatives from the chloroplast to the cytosol. Does not seem to be involved in the transport of indole-derived glucosinolates. The polypeptide is Probable sodium/metabolite cotransporter BASS5, chloroplastic (BASS5) (Arabidopsis thaliana (Mouse-ear cress)).